The sequence spans 149 residues: Golgi apparatus membrane protein tvp-18 (149 aa).

A glycan (N-linked (GlcNAc...) asparagine) is linked at N11. The next 4 helical transmembrane spans lie at 18–38 (WLGI…IFTF), 41–61 (IIIV…FVEV), 84–103 (NYTR…LSCI), and 108–128 (SLLV…LAAL).

It belongs to the TVP18 family.

Its subcellular location is the golgi apparatus membrane. Functionally, golgi membrane protein involved in vesicular trafficking. This chain is Golgi apparatus membrane protein tvp-18 (tvp-18), found in Neurospora crassa (strain ATCC 24698 / 74-OR23-1A / CBS 708.71 / DSM 1257 / FGSC 987).